The following is a 677-amino-acid chain: Protein windpipe (677 aa).

The first 20 residues, 1-20 (MERVHLTAWLALFLIVVANA), serve as a signal peptide directing secretion. The Extracellular portion of the chain corresponds to 21-451 (TPTPARTPTG…IGKPKDDSSA (431 aa)). 2 N-linked (GlcNAc...) asparagine glycosylation sites follow: Asn-53 and Asn-80. LRR repeat units follow at residues 91-116 (LPELTSADLSHNQLKDLGHLGKGLKR), 118-133 (NLKHNQLTSDKLRKLP), 134-156 (QHLQVLNLQHNNITHLPLELTHM), and 158-183 (QLHQLELSHNAINCSCQTLEVRNWLV). N-linked (GlcNAc...) asparagine glycans are attached at residues Asn-145 and Asn-170. An LRRCT domain is found at 184–216 (ERIVYMEHPVVCSYPLEFRGRSWLQLKQDEICK). 3 disordered regions span residues 264-285 (AKKVRSPQIPLPSDQVEGSGDL), 298-317 (TVAEPEAAESQLVDAAASPS), and 325-385 (KDED…TVFS). A compositionally biased stretch (basic and acidic residues) spans 347–372 (SKVKITSEDDIDSDGKPEESDVRPLE). The span at 374–385 (PENSENPDTVFS) shows a compositional bias: polar residues. The chain crosses the membrane as a helical span at residues 452–472 (IYYLLAVIGLIVVGLVLFVAI). Residues 473–677 (KRCKYDSNAA…EPTHQVINGH (205 aa)) lie on the Cytoplasmic side of the membrane. Disordered regions lie at residues 502-523 (LGKPLHKNGHGNGQEHSPLIGE) and 539-677 (NGEA…INGH). Residues 595–607 (AQQQQLAEQNNNE) show a composition bias toward low complexity.

In terms of assembly, interacts with dome; the interaction promotes internalization of dome and its subsequent lysosomal degradation. As to expression, in adult intestine, expressed in both small progenitor cells and large nuclei enterocytes (at protein level). During embryogenesis, restricted to the developing trachea.

Its subcellular location is the cell membrane. In terms of biological role, plays a role in negative regulation of the JAK/STAT pathway by binding to the receptor dome and promoting its internalization for subsequent lysosomal degradation, thereby reducing JAK/STAT signaling. This Drosophila melanogaster (Fruit fly) protein is Protein windpipe.